Here is a 632-residue protein sequence, read N- to C-terminus: Probable potassium transport system protein Kup (632 aa).

Helical transmembrane passes span 19–39, 59–79, 110–130, 146–166, 178–198, 221–241, 256–276, 298–318, 346–366, 375–395, 403–423, and 428–448; these read LVVGAIGVVFGDIGTSPLYSL, IISMLFWAFVIVVSLKYVMFV, LIMMFGIFGACMFYGDAVITP, PGLSHFVIPITLLILALLFFI, FGPIMVVWFLALGALGLIHLV, LQAFIVLGSVFLVLTGAEALY, WFVLVMPCLILNYFGQGAMLL, MVLLATAATVIASQAVISGAF, IYMPVINWILLVLVICVVLAF, AYGIAVTTTMVITTFLAALVM, PALVTLISLTFLVVDMSFFAA, and IAEGGWFPLLMGGSAFFLLMT.

The protein belongs to the HAK/KUP transporter (TC 2.A.72) family.

The protein localises to the cell inner membrane. The enzyme catalyses K(+)(in) + H(+)(in) = K(+)(out) + H(+)(out). In terms of biological role, transport of potassium into the cell. Likely operates as a K(+):H(+) symporter. The chain is Probable potassium transport system protein Kup from Cupriavidus metallidurans (strain ATCC 43123 / DSM 2839 / NBRC 102507 / CH34) (Ralstonia metallidurans).